A 327-amino-acid chain; its full sequence is Ribosomal RNA small subunit methyltransferase H (327 aa).

Residues 42 to 44 (GGH), Asp-61, Leu-95, Asp-109, and Gln-116 contribute to the S-adenosyl-L-methionine site.

The protein belongs to the methyltransferase superfamily. RsmH family.

Its subcellular location is the cytoplasm. It carries out the reaction cytidine(1402) in 16S rRNA + S-adenosyl-L-methionine = N(4)-methylcytidine(1402) in 16S rRNA + S-adenosyl-L-homocysteine + H(+). Specifically methylates the N4 position of cytidine in position 1402 (C1402) of 16S rRNA. This chain is Ribosomal RNA small subunit methyltransferase H, found in Desulfovibrio desulfuricans (strain ATCC 27774 / DSM 6949 / MB).